The chain runs to 318 residues: Protoheme IX farnesyltransferase (318 aa).

9 helical membrane-spanning segments follow: residues 29 to 49, 51 to 71, 102 to 122, 123 to 143, 151 to 171, 179 to 199, 219 to 239, 241 to 261, and 280 to 300; these read IIPL…QGQV, PVLL…AQTI, LIFA…FANL, LAAS…THWL, IVIG…AVTG, LIFA…ALMI, ATVK…LLLV, PLHA…AVFI, and LFLY…VDSL.

The protein belongs to the UbiA prenyltransferase family. Protoheme IX farnesyltransferase subfamily.

Its subcellular location is the cell inner membrane. The catalysed reaction is heme b + (2E,6E)-farnesyl diphosphate + H2O = Fe(II)-heme o + diphosphate. Its pathway is porphyrin-containing compound metabolism; heme O biosynthesis; heme O from protoheme: step 1/1. In terms of biological role, converts heme B (protoheme IX) to heme O by substitution of the vinyl group on carbon 2 of heme B porphyrin ring with a hydroxyethyl farnesyl side group. The protein is Protoheme IX farnesyltransferase of Nostoc sp. (strain PCC 7120 / SAG 25.82 / UTEX 2576).